A 301-amino-acid polypeptide reads, in one-letter code: MKIGILSRNASLYSTKRLIEACKQRGHEVRVIDALRCYMNINSDKPEIHYKGEELAGFDAVIPRIGASVTFYGTAVLRQFEMMGVYPANESVAITRSRDKLRSMQLLSRRGIGMPITGFASKPDDVKDLLDMVGGAPVVIKLLEGTQGIGVVLAETRTAAESVIEAFMGLKANIMVQEYIKEAGGADIRCFVIGDKVIAAMKRQGADGEFRSNLHRGGTASLVKITPQERKTAIEAAKIMGLNVAGVDLLRSARGPLVMEVNSSPGLEGIEAATGKDIAGMIVEFIEKNAASKRTKTRGKG.

The ATP-grasp domain occupies 104 to 287; the sequence is MQLLSRRGIG…IAGMIVEFIE (184 aa). ATP-binding positions include Lys-141, 178-179, Asp-187, and 211-213; these read EY and RSN. Asp-248, Glu-260, and Asn-262 together coordinate Mg(2+). Mn(2+)-binding residues include Asp-248, Glu-260, and Asn-262.

This sequence belongs to the RimK family. Mg(2+) serves as cofactor. Requires Mn(2+) as cofactor.

The chain is Probable alpha-L-glutamate ligase from Vibrio cholerae serotype O1 (strain ATCC 39541 / Classical Ogawa 395 / O395).